Reading from the N-terminus, the 649-residue chain is ABC transporter G family member 5 (649 aa).

Residues valine 42–leucine 284 enclose the ABC transporter domain. Residue glycine 80–serine 87 participates in ATP binding. The interval serine 308–glycine 336 is disordered. Positions glutamate 371–phenylalanine 581 constitute an ABC transmembrane type-2 domain. The next 6 membrane-spanning stretches (helical) occupy residues leucine 390–histidine 410, leucine 425–leucine 445, leucine 474–leucine 494, leucine 506–valine 526, phenylalanine 529–tyrosine 549, and valine 617–cysteine 637.

This sequence belongs to the ABC transporter superfamily. ABCG family. Eye pigment precursor importer (TC 3.A.1.204) subfamily.

The protein resides in the membrane. This is ABC transporter G family member 5 (ABCG5) from Arabidopsis thaliana (Mouse-ear cress).